The primary structure comprises 937 residues: Inactive tyrosine-protein kinase transmembrane receptor ROR1 (937 aa).

The N-terminal stretch at 1-29 (MHRPRRRGTRPPLLALLAALLLAARGAAA) is a signal peptide. Residues 30–406 (QETELSVSAE…KEKNKMEILY (377 aa)) lie on the Extracellular side of the membrane. The Ig-like C2-type domain occupies 42-147 (PTSSWNISSE…EVVSSTGVLF (106 aa)). 2 N-linked (GlcNAc...) asparagine glycosylation sites follow: Asn-47 and Asn-66. Cystine bridges form between Cys-79/Cys-131, Cys-170/Cys-235, Cys-178/Cys-228, Cys-219/Cys-260, Cys-248/Cys-296, Cys-252/Cys-282, Cys-313/Cys-391, Cys-334/Cys-374, and Cys-362/Cys-386. Residues 165–299 (EEDGFCQPYR…SPEAANCIRI (135 aa)) enclose the FZ domain. Asn-184 carries an N-linked (GlcNAc...) asparagine glycan. The Kringle domain maps to 312–391 (KCYNSTGVDY…KSDLCDIPAC (80 aa)). Asn-315 carries an N-linked (GlcNAc...) asparagine glycan. A helical transmembrane segment spans residues 407–427 (ILVPSVAIPLAIALLFFFICV). Residues 428-937 (CRNNQKSSSA…HTESMISAEL (510 aa)) lie on the Cytoplasmic side of the membrane. The Protein kinase domain occupies 473-746 (VRFMEELGEC…PRFKDIHVRL (274 aa)). ATP is bound by residues 479-487 (LGECAFGKI) and Lys-506. A Phosphotyrosine; by autocatalysis modification is found at Tyr-645. Positions 753-762 (SSHTSSTTPS) are enriched in low complexity. Disordered stretches follow at residues 753-779 (SSHT…SPVS) and 833-890 (AAHY…HMSI). The segment covering 763 to 779 (GGNATTQTTSLSASPVS) has biased composition (polar residues). The segment covering 854 to 864 (RSPSSASGSTS) has biased composition (low complexity). Positions 865 to 880 (TGHVTSLPSSGSNQEA) are enriched in polar residues.

It belongs to the protein kinase superfamily. Tyr protein kinase family. ROR subfamily. Interacts with ERBB2 and IGFBP5. Expressed strongly in human heart, lung and kidney, but weakly in the CNS. Isoform Short is strongly expressed in fetal and adult CNS and in a variety of human cancers, including those originating from CNS or PNS neuroectoderm.

It localises to the membrane. The protein resides in the cell projection. It is found in the axon. Has very low kinase activity in vitro and is unlikely to function as a tyrosine kinase in vivo. Receptor for ligand WNT5A which activate downstream NFkB signaling pathway and may result in the inhibition of WNT3A-mediated signaling. In inner ear, crucial for spiral ganglion neurons to innervate auditory hair cells. Via IGFBP5 ligand, forms a complex with ERBB2 to enhance CREB oncogenic signaling. This Homo sapiens (Human) protein is Inactive tyrosine-protein kinase transmembrane receptor ROR1 (ROR1).